A 466-amino-acid polypeptide reads, in one-letter code: 3-isopropylmalate dehydratase large subunit (466 aa).

[4Fe-4S] cluster is bound by residues C347, C407, and C410.

The protein belongs to the aconitase/IPM isomerase family. LeuC type 1 subfamily. Heterodimer of LeuC and LeuD. [4Fe-4S] cluster is required as a cofactor.

It catalyses the reaction (2R,3S)-3-isopropylmalate = (2S)-2-isopropylmalate. It functions in the pathway amino-acid biosynthesis; L-leucine biosynthesis; L-leucine from 3-methyl-2-oxobutanoate: step 2/4. Functionally, catalyzes the isomerization between 2-isopropylmalate and 3-isopropylmalate, via the formation of 2-isopropylmaleate. This chain is 3-isopropylmalate dehydratase large subunit, found in Escherichia coli O157:H7.